A 359-amino-acid chain; its full sequence is Peptide chain release factor 1 (359 aa).

N5-methylglutamine is present on Q236.

The protein belongs to the prokaryotic/mitochondrial release factor family. Post-translationally, methylated by PrmC. Methylation increases the termination efficiency of RF1.

It is found in the cytoplasm. Its function is as follows. Peptide chain release factor 1 directs the termination of translation in response to the peptide chain termination codons UAG and UAA. This is Peptide chain release factor 1 from Streptococcus pyogenes serotype M6 (strain ATCC BAA-946 / MGAS10394).